The following is a 137-amino-acid chain: MAHRSHTGTGPSQRQLRVGELIRRTLADVLNRGEIHDPELNRLSITVGEVRCSPDLKVATVHVMPLGGKNVEEAIALLSKHRGELRHHITRQMTLKYAPDLRFRPDETFDRLDETRRLFSDETVMRDIRGGGEADED.

The protein belongs to the RbfA family. In terms of assembly, monomer. Binds 30S ribosomal subunits, but not 50S ribosomal subunits or 70S ribosomes.

It localises to the cytoplasm. In terms of biological role, one of several proteins that assist in the late maturation steps of the functional core of the 30S ribosomal subunit. Associates with free 30S ribosomal subunits (but not with 30S subunits that are part of 70S ribosomes or polysomes). Required for efficient processing of 16S rRNA. May interact with the 5'-terminal helix region of 16S rRNA. The protein is Ribosome-binding factor A of Cereibacter sphaeroides (strain ATCC 17029 / ATH 2.4.9) (Rhodobacter sphaeroides).